The following is a 148-amino-acid chain: NADPH-dependent 7-cyano-7-deazaguanine reductase (148 aa).

Residue Cys50 is the Thioimide intermediate of the active site. Residue Asp57 is the Proton donor of the active site. Substrate-binding positions include 72-74 (VES) and 91-92 (HE).

The protein belongs to the GTP cyclohydrolase I family. QueF type 1 subfamily.

It localises to the cytoplasm. It carries out the reaction 7-aminomethyl-7-carbaguanine + 2 NADP(+) = 7-cyano-7-deazaguanine + 2 NADPH + 3 H(+). The protein operates within tRNA modification; tRNA-queuosine biosynthesis. Functionally, catalyzes the NADPH-dependent reduction of 7-cyano-7-deazaguanine (preQ0) to 7-aminomethyl-7-deazaguanine (preQ1). In Helicobacter acinonychis (strain Sheeba), this protein is NADPH-dependent 7-cyano-7-deazaguanine reductase.